The sequence spans 359 residues: Short chain dehydrogenase resG (359 aa).

The NADP(+) site is built by lysine 87, aspartate 110, asparagine 137, tyrosine 237, and lysine 241. Tyrosine 237 (proton donor) is an active-site residue. Lysine 241 serves as the catalytic Lowers pKa of active site Tyr.

It belongs to the short-chain dehydrogenases/reductases (SDR) family.

It participates in antifungal biosynthesis. Its function is as follows. Short chain dehydrogenase; part of the gene cluster that mediates the biosynthesis of the tetrahydropyranyl antifungal agent restricticin that acts as an inhibitor of CYP51 and blocks the ergosterol biosynthesis. The highly reducing polyketide synthase resH, the short chain dehydrogenase resG, the cyclase resF, the FAD-dependent monooxygenase resA and the enoylreductase resD are required to generate the first stable intermediate desmethylrestrictinol. ResH with resD biosynthesize the first polyketide chain intermediate that is reduced by resG, followed by epoxidation by resA before 6-endo cyclization via epoxide opening by resF leads to desmethylrestrictinol. The methyltransferase resE then catalyzes the C4 O-methylation of desmethylrestrictinol to produce restrictinol, and the nonribosomal peptide synthetase resC catalyzes the C3 esterification of restrictinol with glycine that leads to restricticin. In Aspergillus sclerotiorum, this protein is Short chain dehydrogenase resG.